We begin with the raw amino-acid sequence, 1049 residues long: Self-sufficient cytochrome P450 monooxygenase CYP505E4 (1049 aa).

Cysteine 405 serves as a coordination point for heme. The tract at residues 462 to 492 is disordered; it reads ATALSQHNMSAGATSSPGSSAHPAGNKNAQD. Residues 471–486 are compositionally biased toward low complexity; that stretch reads SAGATSSPGSSAHPAG. The region spanning 499 to 640 is the Flavodoxin-like domain; the sequence is ISFFYGSNSG…DLEVWEETNL (142 aa). Residues 505 to 509 and 584 to 616 contribute to the FMN site; these read SNSGT and VFGC…TRLT. Residues 678–906 enclose the FAD-binding FR-type domain; the sequence is RDLIEGKVTA…RPAKEAFHLP (229 aa).

This sequence in the N-terminal section; belongs to the cytochrome P450 family. FAD serves as cofactor. Requires FMN as cofactor. It depends on heme as a cofactor.

The enzyme catalyses 2 oxidized [cytochrome P450] + NADPH = 2 reduced [cytochrome P450] + NADP(+) + H(+). The catalysed reaction is an organic molecule + reduced [NADPH--hemoprotein reductase] + O2 = an alcohol + oxidized [NADPH--hemoprotein reductase] + H2O + H(+). It carries out the reaction dodecanoate + reduced [NADPH--hemoprotein reductase] + O2 = 5-hydroxydodecanoate + oxidized [NADPH--hemoprotein reductase] + H2O + H(+). It catalyses the reaction tetradecanoate + reduced [NADPH--hemoprotein reductase] + O2 = 7-hydroxytetradecanoate + oxidized [NADPH--hemoprotein reductase] + H2O + H(+). The enzyme catalyses dodecan-1-ol + reduced [NADPH--hemoprotein reductase] + O2 = 1,5-dodecanediol + oxidized [NADPH--hemoprotein reductase] + H2O + H(+). The catalysed reaction is dodecan-1-ol + reduced [NADPH--hemoprotein reductase] + O2 = 1,4-dodecanediol + oxidized [NADPH--hemoprotein reductase] + H2O + H(+). It carries out the reaction dodecan-1-ol + reduced [NADPH--hemoprotein reductase] + O2 = 1,6-dodecanediol + oxidized [NADPH--hemoprotein reductase] + H2O + H(+). Self-sufficient cytochrome P450 monooxygenase that catalyzes the regioselective in-chain hydroxylation of alkanes, fatty alcohols, and fatty acids at the omega-7 position. Performs hydroxylation of C10-C16 n-alkanes and C12 and C14 fatty alcohols; and thereby enables the one step biocatalytic synthesis of rare alcohols such as 5-dodecanol and 7-tetradecanol. Converts 1-dodecanol into 1,5-dodecanediol as major product with very little sub-terminally hydroxylated products with the 1,4-dodecanediol and 1,6-dodecanediol more abundant. Converts dodecanoic acid to 5-hydroxydodecanoic acid which can be further converted into delta-dodecalactone by lactonization of the 5-hydroxy acid at low pH. Also gives sub-terminal hydroxylation of dodecanoic acid with 9-hydroxydodecanoic acid being the second most abundant product. The sequence is that of Self-sufficient cytochrome P450 monooxygenase CYP505E4 from Penicillium freii.